Here is a 206-residue protein sequence, read N- to C-terminus: UPF0301 protein Msil_1255 (206 aa).

It belongs to the UPF0301 (AlgH) family.

In Methylocella silvestris (strain DSM 15510 / CIP 108128 / LMG 27833 / NCIMB 13906 / BL2), this protein is UPF0301 protein Msil_1255.